Reading from the N-terminus, the 433-residue chain is Ribosomal protein uS12 methylthiotransferase RimO (433 aa).

An MTTase N-terminal domain is found at 9–124; it reads NKINVITLGC…LLKALGADYR (116 aa). Cysteine 18, cysteine 53, cysteine 87, cysteine 148, cysteine 152, and cysteine 155 together coordinate [4Fe-4S] cluster. The Radical SAM core domain occupies 134–364; it reads TTPKNYAYLK…MDLQSQISWD (231 aa). The TRAM domain maps to 367 to 433; the sequence is QEKLGQTFRC…TEFDLYGEPA (67 aa).

Belongs to the methylthiotransferase family. RimO subfamily. It depends on [4Fe-4S] cluster as a cofactor.

It is found in the cytoplasm. The enzyme catalyses L-aspartate(89)-[ribosomal protein uS12]-hydrogen + (sulfur carrier)-SH + AH2 + 2 S-adenosyl-L-methionine = 3-methylsulfanyl-L-aspartate(89)-[ribosomal protein uS12]-hydrogen + (sulfur carrier)-H + 5'-deoxyadenosine + L-methionine + A + S-adenosyl-L-homocysteine + 2 H(+). Its function is as follows. Catalyzes the methylthiolation of an aspartic acid residue of ribosomal protein uS12. The chain is Ribosomal protein uS12 methylthiotransferase RimO from Flavobacterium psychrophilum (strain ATCC 49511 / DSM 21280 / CIP 103535 / JIP02/86).